A 123-amino-acid polypeptide reads, in one-letter code: UPF0102 protein CLD_2200 (123 aa).

This sequence belongs to the UPF0102 family.

The chain is UPF0102 protein CLD_2200 from Clostridium botulinum (strain Okra / Type B1).